Here is a 102-residue protein sequence, read N- to C-terminus: N(4)-acetylcytidine amidohydrolase (102 aa).

One can recognise an ASCH domain in the interval Thr6–Asp92. Lys20 serves as the catalytic Proton acceptor. Thr23 functions as the Nucleophile in the catalytic mechanism. Glu73 (proton donor) is an active-site residue.

Belongs to the N(4)-acetylcytidine amidohydrolase family.

The enzyme catalyses N(4)-acetylcytidine + H2O = cytidine + acetate + H(+). The catalysed reaction is N(4)-acetyl-2'-deoxycytidine + H2O = 2'-deoxycytidine + acetate + H(+). It catalyses the reaction N(4)-acetylcytosine + H2O = cytosine + acetate + H(+). Functionally, catalyzes the hydrolysis of N(4)-acetylcytidine (ac4C). This is N(4)-acetylcytidine amidohydrolase from Yersinia pseudotuberculosis serotype O:1b (strain IP 31758).